Consider the following 60-residue polypeptide: Transcriptional regulatory protein SenN (60 aa).

Residues 11 to 31 (RFRKRKTFGNQILPLELLIEK) constitute a DNA-binding region (H-T-H motif).

The protein to B.subtilis SenS.

Regulates the expression of extracellular-protein genes of Bacillus natto. The polypeptide is Transcriptional regulatory protein SenN (senN) (Bacillus subtilis subsp. natto).